The chain runs to 2136 residues: U5 small nuclear ribonucleoprotein 200 kDa helicase (2136 aa).

A phosphoserine mark is found at serine 17 and serine 26. A Glycyl lysine isopeptide (Lys-Gly) (interchain with G-Cter in SUMO2) cross-link involves residue lysine 46. The tract at residues 50 to 80 is disordered; it reads TRMGDKAQRTKPQMQEERRAKRRKRDEDRHD. Residues 54–84 are a coiled coil; sequence DKAQRTKPQMQEERRAKRRKRDEDRHDINKM. Serine 225 is subject to Phosphoserine. Threonine 389 is subject to Phosphothreonine. The tract at residues 395-2129 is interaction with C9orf78 and WBP4; that stretch reads DLDQGGEALA…YKFSVDVKEA (1735 aa). One can recognise a Helicase ATP-binding 1 domain in the interval 490 to 673; it reads RAALETDENL…FLRVDPAKGL (184 aa). 503-510 is an ATP binding site; the sequence is APTGAGKT. Residues 615-618 carry the DEIH box motif; it reads DEIH. The Helicase C-terminal 1 domain occupies 684–921; it reads PLEQTYVGIT…NAKDAVNWLG (238 aa). Tyrosine 709 is subject to Phosphotyrosine. At lysine 971 the chain carries N6-acetyllysine. The 306-residue stretch at 981–1286 folds into the SEC63 1 domain; the sequence is VTELGRIASH…SCETQLPVSF (306 aa). Residues 1282 to 2136 are interaction with TSSC4; that stretch reads LPVSFRHLIL…KEAETDSDSD (855 aa). The Helicase ATP-binding 2 domain maps to 1337–1512; it reads NTVYNSDDNV…WLGCSATSTF (176 aa). Residue 1350 to 1357 participates in ATP binding; the sequence is APTGSGKT. Phosphothreonine is present on threonine 1428. The DEVH box signature appears at 1454–1457; it reads DEVH. The 209-residue stretch at 1545-1753 folds into the Helicase C-terminal 2 domain; the sequence is PVYHAITKHS…TIENKQDAVD (209 aa). Position 1765 is a phosphothreonine (threonine 1765). The 313-residue stretch at 1812–2124 folds into the SEC63 2 domain; it reads PLNLGMIAAY…GCDQEYKFSV (313 aa). Serine 2002 is modified (phosphoserine). The residue at position 2131 (threonine 2131) is a Phosphothreonine. 2 positions are modified to phosphoserine: serine 2133 and serine 2135.

Belongs to the helicase family. SKI2 subfamily. Component of a core complex containing at least PRPF8, SNRNP200, EFTUD2 and SNRNP40. Component of the U5 snRNP and U4/U6-U5 tri-snRNP complexes, building blocks of the spliceosome. Component of the U4/U6-U5 tri-snRNP complex composed of the U4, U6 and U5 snRNAs and at least PRPF3, PRPF4, PRPF6, PRPF8, PRPF31, SNRNP200, TXNL4A, SNRNP40, DDX23, CD2BP2, PPIH, SNU13, EFTUD2, SART1 and USP39. Component of precatalytic, catalytic and postcatalytic spliceosomal complexes. Component of the minor spliceosome, which splices U12-type introns. Interacts with C9orf78; the interaction is direct and mutually exclusive with its interaction with WBP4. Interacts with WBP4; the interaction is mutually exclusive with its interaction with C9orf78. Interacts with PRPF8. Interacts with TSSC4; the interaction is direct, excludes recruitment of C9ORF78 and WBP4 to SNRNP200 and negatively regulates its RNA helicase activity. In terms of tissue distribution, widely expressed.

The protein localises to the nucleus. The catalysed reaction is ATP + H2O = ADP + phosphate + H(+). Functionally, catalyzes the ATP-dependent unwinding of U4/U6 RNA duplices, an essential step in the assembly of a catalytically active spliceosome. Plays a role in pre-mRNA splicing as a core component of precatalytic, catalytic and postcatalytic spliceosomal complexes. As a component of the minor spliceosome, involved in the splicing of U12-type introns in pre-mRNAs. Involved in spliceosome assembly, activation and disassembly. Mediates changes in the dynamic network of RNA-RNA interactions in the spliceosome. This Homo sapiens (Human) protein is U5 small nuclear ribonucleoprotein 200 kDa helicase (SNRNP200).